Consider the following 60-residue polypeptide: Small, acid-soluble spore protein C2 (60 aa).

It belongs to the alpha/beta-type SASP family. SASP are degraded in the first minutes of spore germination and provide amino acids for both new protein synthesis and metabolism.

Functionally, SASP are bound to spore DNA. They are double-stranded DNA-binding proteins that cause DNA to change to an a-like conformation. They protect the DNA backbone from chemical and enzymatic cleavage and are thus involved in dormant spore's high resistance to UV light. The polypeptide is Small, acid-soluble spore protein C2 (sspC2) (Clostridium perfringens (strain 13 / Type A)).